Reading from the N-terminus, the 353-residue chain is Aromatic amino acid aminotransferase (353 aa).

Lys217 is modified (N6-(pyridoxal phosphate)lysine).

The protein belongs to the class-II pyridoxal-phosphate-dependent aminotransferase family. In terms of assembly, homodimer. Requires pyridoxal 5'-phosphate as cofactor.

It carries out the reaction an aromatic L-alpha-amino acid + 2-oxoglutarate = an aromatic oxo-acid + L-glutamate. Functionally, aminotransferase that catalyzes the conversion of aromatic amino acids and 2-oxoglutarate into corresponding aromatic oxo acids and L-glutamate. The sequence is that of Aromatic amino acid aminotransferase from Mycobacterium bovis (strain ATCC BAA-935 / AF2122/97).